Reading from the N-terminus, the 835-residue chain is Protein translocase subunit SecA 1 (835 aa).

Residues Q85, G103–T107, and D492 contribute to the ATP site. Residues V788–V807 are disordered. 4 residues coordinate Zn(2+): C819, C821, C830, and C831.

It belongs to the SecA family. As to quaternary structure, monomer and homodimer. Part of the essential Sec protein translocation apparatus which comprises SecA, SecYEG and auxiliary proteins SecDF. Other proteins may also be involved. The cofactor is Zn(2+).

It localises to the cell membrane. It is found in the cytoplasm. It carries out the reaction ATP + H2O + cellular proteinSide 1 = ADP + phosphate + cellular proteinSide 2.. In terms of biological role, part of the Sec protein translocase complex. Interacts with the SecYEG preprotein conducting channel. Has a central role in coupling the hydrolysis of ATP to the transfer of proteins into and across the cell membrane, serving as an ATP-driven molecular motor driving the stepwise translocation of polypeptide chains across the membrane. The sequence is that of Protein translocase subunit SecA 1 from Bacillus thuringiensis (strain Al Hakam).